The sequence spans 523 residues: Rho guanine nucleotide exchange factor 8 (523 aa).

Residues 44–57 (VESNTPESQNSDSF) show a composition bias toward polar residues. Disordered regions lie at residues 44 to 83 (VESN…ERQQ) and 442 to 523 (ETSD…KDRH). A PRONE domain is found at 76–440 (GKRSERQQAD…TLALKQTLLA (365 aa)). Residues 465 to 475 (EAEKHDPHSKT) show a composition bias toward basic and acidic residues.

Homodimer. The homodimer interacts with ARAC5/ROP4. Interacts with ARAC11/ROP1 and ARAC10/ROP11. Interacts with PRK6. In terms of tissue distribution, expressed in pollen grains and pollen tubes.

It localises to the cell membrane. Guanine-nucleotide exchange factor (GEF) that acts as an activator of Rop (Rho of plants) GTPases by promoting the exchange of GDP for GTP. Active as homodimer. The sequence is that of Rho guanine nucleotide exchange factor 8 from Arabidopsis thaliana (Mouse-ear cress).